We begin with the raw amino-acid sequence, 336 residues long: Nicotinate-nucleotide--dimethylbenzimidazole phosphoribosyltransferase (336 aa).

E304 (proton acceptor) is an active-site residue.

The protein belongs to the CobT family.

It carries out the reaction 5,6-dimethylbenzimidazole + nicotinate beta-D-ribonucleotide = alpha-ribazole 5'-phosphate + nicotinate + H(+). The protein operates within nucleoside biosynthesis; alpha-ribazole biosynthesis; alpha-ribazole from 5,6-dimethylbenzimidazole: step 1/2. In terms of biological role, catalyzes the synthesis of alpha-ribazole-5'-phosphate from nicotinate mononucleotide (NAMN) and 5,6-dimethylbenzimidazole (DMB). This chain is Nicotinate-nucleotide--dimethylbenzimidazole phosphoribosyltransferase, found in Mesorhizobium japonicum (strain LMG 29417 / CECT 9101 / MAFF 303099) (Mesorhizobium loti (strain MAFF 303099)).